Reading from the N-terminus, the 287-residue chain is Large ribosomal subunit protein uL2 (287 aa).

The tract at residues 221–287 (RGSVMNPCDH…SKRSRGGRDS (67 aa)) is disordered. The segment covering 258–287 (KTRKRNKPSNKFVLRKRRKTSKRSRGGRDS) has biased composition (basic residues).

It belongs to the universal ribosomal protein uL2 family. In terms of assembly, part of the 50S ribosomal subunit. Forms a bridge to the 30S subunit in the 70S ribosome.

Functionally, one of the primary rRNA binding proteins. Required for association of the 30S and 50S subunits to form the 70S ribosome, for tRNA binding and peptide bond formation. It has been suggested to have peptidyltransferase activity; this is somewhat controversial. Makes several contacts with the 16S rRNA in the 70S ribosome. This is Large ribosomal subunit protein uL2 from Synechococcus sp. (strain CC9311).